We begin with the raw amino-acid sequence, 540 residues long: Light-independent protochlorophyllide reductase subunit B (540 aa).

Asp36 is a [4Fe-4S] cluster binding site. Asp292 acts as the Proton donor in catalysis. 428–429 contacts substrate; that stretch reads GL. The interval 451 to 490 is disordered; it reads SNVASGVEPSTPSVSSEVSASSSASPEASAPTPSPDGDMV. The segment covering 457 to 481 has biased composition (low complexity); the sequence is VEPSTPSVSSEVSASSSASPEASAP.

The protein belongs to the ChlB/BchB/BchZ family. As to quaternary structure, protochlorophyllide reductase is composed of three subunits; BchL, BchN and BchB. Forms a heterotetramer of two BchB and two BchN subunits. It depends on [4Fe-4S] cluster as a cofactor.

The enzyme catalyses chlorophyllide a + oxidized 2[4Fe-4S]-[ferredoxin] + 2 ADP + 2 phosphate = protochlorophyllide a + reduced 2[4Fe-4S]-[ferredoxin] + 2 ATP + 2 H2O. Its pathway is porphyrin-containing compound metabolism; bacteriochlorophyll biosynthesis (light-independent). Component of the dark-operative protochlorophyllide reductase (DPOR) that uses Mg-ATP and reduced ferredoxin to reduce ring D of protochlorophyllide (Pchlide) to form chlorophyllide a (Chlide). This reaction is light-independent. The NB-protein (BchN-BchB) is the catalytic component of the complex. This chain is Light-independent protochlorophyllide reductase subunit B, found in Chlorobium chlorochromatii (strain CaD3).